Here is a 375-residue protein sequence, read N- to C-terminus: Alcohol dehydrogenase E chain (375 aa).

Ser2 carries the post-translational modification N-acetylserine. Positions 47, 49, 68, 98, 101, 104, 112, and 175 each coordinate Zn(2+). An alcohol is bound by residues Ser49 and His68. Ser49 provides a ligand contact to NAD(+). NAD(+) is bound by residues 200 to 205 (GLGGVG), Asp224, Lys229, Val293, 293 to 295 (VGV), Phe320, and Arg370.

This sequence belongs to the zinc-containing alcohol dehydrogenase family. Class-I subfamily. Dimer of identical or non-identical chains of two types (E and S) coded by 2 separate genes at different loci. Requires Zn(2+) as cofactor.

It localises to the cytoplasm. The catalysed reaction is a primary alcohol + NAD(+) = an aldehyde + NADH + H(+). It carries out the reaction a secondary alcohol + NAD(+) = a ketone + NADH + H(+). This is Alcohol dehydrogenase E chain from Equus caballus (Horse).